Here is a 1929-residue protein sequence, read N- to C-terminus: MIQITIDVILEDPTLCVVQLYTQVSSQTVFALLSDGSLAVLYPNDNNALVLASKTSMANQLPVDILRKVITTDEGQVQVPITALACHPFVENLVVVGFKDASFSIWFPTDSDPSYKTELHQEELCLIKWLSHGRILVTCDVSGQVILYKFSTDTYSFESITKTRKSGHVVDIVERTCCTDNIIYSIDQEHSDHPIDVSNYAGVGLCEFIVMWSKGDVAVLTDNGVIRHIGTVNLSAGHALLYKLYYWSCSDTCCAISTSGDMFLFGFKTLAVGAYKDILAKYKIEYKRENGIVQLPATKIAYMAPSDGQLRVLSLLTQEVAYIDLEDHIENFVGVNGGLAVIRDYGILIPLRGKNGYAVVSCHRSTGSCDSNGNEGMHILAASDHYLHANDMRFARVQDSNGPSSGPRIRPGSDEFIVTEQHFLHAENPRCSYANIYMSQIVVGDNSFSQTMITNYSITNRNVVSNKMLPIFHDEGGKPINLPPGFSPETASTPEGVDDATIDSFSAEIISSRGKFVSLLLFSFEPKDMQVAYANNTNSAIMAQDLTGEGLTHMKFLDQKFTDSRNSFISAVLIGARIIKVSVNTNANLLQEHTLEIKHPIKKISILTNPLTSVSSDNLSGFVLAFGDNVFTVFEVAIGKVPHLAGSFKLDERYTYVADCVLYGRYILASQNSRADLESDYLKVEIVKYSITGSKAGSLVLSDDPTHGATVERIARMTLVNQHLFMINNNLSLFYTDCKTFNSVVKITDIGQLMFNTNIYCAYLEEEDLDDIHLSTPDTGSPAVEAEESPQRQTREEKIKDLLLVENTMQINQQLHDRIKQERKEQNVISVYTTLPTLIPLDTICVQSCNATITLDNAHHVLFTVVFKGYNVVTGLPCLLPYVVALSIDTKILGEMISAGLTATPSQPTEKVGSRPTTGSDGGSAVLKSRIFDMAPYTVTNAIPDCFGNIGLELVLSTSLNLLFVGSSMLFALKTGTFTKRALSSKNLSAYLSWLDSKEKGSQRNADLVFQQEKYEDQISLLQSIYISSEQRAKVPLLVQSLAETTISMNDRIKGSWLDFNDKIFLSIQGVFAPYVNSKLETLMQPLSSTMLTLLSPAFVFSERSGKSEKPRTSNFVSINSDRLTIKNLTALGSSKKTGFQQSCTATYALNKFTICSSNGQLAEAYSHVLVSENLHVWRSLATLCIQNGYVDLLKTCTTHLKSPILSLLMRLVTNRKRSDAADTGQDQLKTKLAPQDELLLALLSIALGASAQGLDRLQGKPLLLSGVMNDIGLSIRYLMSDGAHSSLQQTGGLTSLAKKSSILSLANRLIHLNDLESSKICYSEVYKAPVAAQGEIDSLNANPQQLLQQNESVQFLNDEYKKKGVAACLTLAKKGTDPQFLYVAARMIESEAKSRDVKSDIPGKMKDELDQQTLWLEAARLYKRCSAFTHALACALKCEDDELIYNIGTTSQSQRLSLVAATYFSNKYKSGLITISEKGRDNVSEDFCDELQATIEHALVLYKSAGLGAQSLELCIKSNRMKELSNLLADILSEPSKSLDRELDDDVVLQEQSTTTQGTGDVLQGISSDLLLRAGRALLDVSPEDYSLNDYNSFIRTAVIALAKASAYQDALQAILDGKIQISERIADILTPASIEHDEEAVRVTETLGKLLHKAGLYQSAVKKFILAQNHTLAINSLIKQGDPMKVIKFANMARQKQVYIAASNFLQTLDWRSNPTYMKAIISFYEKANSLENIAKFFANCAAEEISEYHDYVKAKQAIIEAMNRQKVAIDYVEQNASSKESEKVATARAAKVASLKKTLQAYEQNGKLIHAFLQLCDFARDTSQAHDSSETLTTNSSKLLTAVRKMENCYVKPGDIMGLLAEFHGVRGEKARIVSIIKDMCNEGIDPENYLAADLYAAHAAEAGLTVVNKALELEDIDLTAEKSDH.

WD repeat units follow at residues glutamine 76–lysine 116 and leucine 119–glutamate 158. The segment at leucine 774–arginine 795 is disordered. LRR repeat units lie at residues serine 957 to lysine 980, isoleucine 1019 to glutamate 1044, and alanine 1510 to isoleucine 1532.

Its subcellular location is the cell projection. It is found in the cilium. It localises to the flagellum. The protein localises to the cytoplasm. The protein resides in the cytoskeleton. Its subcellular location is the flagellum axoneme. It is found in the flagellum basal body. In terms of biological role, component of the intraflagellar transport complex A (IFT-A) involved in flagellar assembly. The sequence is that of Intraflagellar transport protein 140 from Giardia intestinalis (strain ATCC 50803 / WB clone C6) (Giardia lamblia).